The sequence spans 325 residues: ATP synthase gamma chain (325 aa).

It belongs to the ATPase gamma chain family. In terms of assembly, F-type ATPases have 2 components, CF(1) - the catalytic core - and CF(0) - the membrane proton channel. CF(1) has five subunits: alpha(3), beta(3), gamma(1), delta(1), epsilon(1). CF(0) has three main subunits: a, b and c.

It localises to the cell membrane. Produces ATP from ADP in the presence of a proton gradient across the membrane. The gamma chain is believed to be important in regulating ATPase activity and the flow of protons through the CF(0) complex. The protein is ATP synthase gamma chain of Corynebacterium glutamicum (strain R).